The chain runs to 827 residues: Cadherin-17 (827 aa).

Residues 1–21 (MVSAQLHFLCLLTLYLTGAYG) form the signal peptide. The Extracellular portion of the chain corresponds to 22–786 (QEGKFSGPLK…NQVGIPTVGM (765 aa)). 7 consecutive Cadherin domains span residues 29–127 (PLKP…TFLQ), 128–243 (TKYE…APEP), 244–339 (VEIR…PPTC), 340–448 (LSQV…IPIF), 449–565 (ERSD…VPVF), 566–666 (PQQI…PPRL), and 667–776 (AKDY…RPAG). N-linked (GlcNAc...) asparagine glycans are attached at residues asparagine 148, asparagine 183, asparagine 249, asparagine 418, asparagine 545, asparagine 573, and asparagine 721. The helical transmembrane segment at 787–807 (AVGILLTTFLVIGIILAVVFI) threads the bilayer. Residues 808 to 827 (RMRKDKVEDPQSPENKPLRS) lie on the Cytoplasmic side of the membrane.

Liver and intestine.

Its subcellular location is the cell membrane. In terms of biological role, cadherins are calcium-dependent cell adhesion proteins. They preferentially interact with themselves in a homophilic manner in connecting cells; cadherins may thus contribute to the sorting of heterogeneous cell types. LI-cadherin may have a role in the morphological organization of liver and intestine. This chain is Cadherin-17 (Cdh17), found in Rattus norvegicus (Rat).